The following is a 182-amino-acid chain: MEQGKGLAGLFLVISLLQGTMAQQKEEKHLVKVDDSQGDGSVLLTCDFNEKTITWLKDGHRISPPNATKSTWNLGNGAKDPRGMYQCRGAKKKSQLLQVYYRLCENCIELNMGTVSGFIFAEIISIFFLAVGVYFIAGQDGVRQSRASDKQTLLQNEQVYQPLKDREYEQYSRLQGNQVRKK.

A signal peptide spans 1–22 (MEQGKGLAGLFLVISLLQGTMA). Over 23–116 (QQKEEKHLVK…CIELNMGTVS (94 aa)) the chain is Extracellular. Residues 37–94 (QGDGSVLLTCDFNEKTITWLKDGHRISPPNATKSTWNLGNGAKDPRGMYQCRGAKKKS) form the Ig-like domain. A disulfide bridge links Cys-46 with Cys-87. The N-linked (GlcNAc...) asparagine glycan is linked to Asn-66. The helical transmembrane segment at 117–137 (GFIFAEIISIFFLAVGVYFIA) threads the bilayer. Over 138–182 (GQDGVRQSRASDKQTLLQNEQVYQPLKDREYEQYSRLQGNQVRKK) the chain is Cytoplasmic. At Ser-145 the chain carries Phosphoserine. Phosphoserine; by PKC is present on Ser-148. The ITAM domain occupies 149-177 (DKQTLLQNEQVYQPLKDREYEQYSRLQGN). Positions 153–154 (LL) match the Di-leucine motif motif.

The TCR-CD3 complex is composed of a CD3D/CD3E and a CD3G/CD3E heterodimers that preferentially associate with TCRalpha and TCRbeta, respectively, to form TCRalpha/CD3E/CD3G and TCRbeta/CD3G/CD3E trimers. In turn, the hexamer interacts with CD3Z homodimer to form the TCR-CD3 complex. Alternatively, TCRalpha and TCRbeta can be replaced by TCRgamma and TCRdelta. Phosphorylated on Tyr residues after T-cell receptor triggering by LCK in association with CD4/CD8. Phosphorylated also by PKC; leading to the TCR complex down-regulation. Post-translationally, phosphorylated on Tyr residues after T-cell receptor triggering by LCK in association with CD4/CD8.

It is found in the cell membrane. Part of the TCR-CD3 complex present on T-lymphocyte cell surface that plays an essential role in adaptive immune response. When antigen presenting cells (APCs) activate T-cell receptor (TCR), TCR-mediated signals are transmitted across the cell membrane by the CD3 chains CD3D, CD3E, CD3G and CD3Z. All CD3 chains contain immunoreceptor tyrosine-based activation motifs (ITAMs) in their cytoplasmic domain. Upon TCR engagement, these motifs become phosphorylated by Src family protein tyrosine kinases LCK and FYN, resulting in the activation of downstream signaling pathways. In addition to this role of signal transduction in T-cell activation, CD3G plays an essential role in the dynamic regulation of TCR expression at the cell surface. Indeed, constitutive TCR cycling is dependent on the di-leucine-based (diL) receptor-sorting motif present in CD3G. The polypeptide is T-cell surface glycoprotein CD3 gamma chain (Cd3g) (Rattus norvegicus (Rat)).